The following is a 687-amino-acid chain: Light-independent protochlorophyllide reductase subunit B (687 aa).

Residue Asp-36 coordinates [4Fe-4S] cluster. Catalysis depends on Asp-441, which acts as the Proton donor. 576 to 577 provides a ligand contact to substrate; sequence GM.

It belongs to the ChlB/BchB/BchZ family. In terms of assembly, protochlorophyllide reductase is composed of three subunits; ChlL, ChlN and ChlB. Forms a heterotetramer of two ChlB and two ChlN subunits. The cofactor is [4Fe-4S] cluster.

The protein resides in the plastid. The protein localises to the chloroplast. It carries out the reaction chlorophyllide a + oxidized 2[4Fe-4S]-[ferredoxin] + 2 ADP + 2 phosphate = protochlorophyllide a + reduced 2[4Fe-4S]-[ferredoxin] + 2 ATP + 2 H2O. It participates in porphyrin-containing compound metabolism; chlorophyll biosynthesis (light-independent). Functionally, component of the dark-operative protochlorophyllide reductase (DPOR) that uses Mg-ATP and reduced ferredoxin to reduce ring D of protochlorophyllide (Pchlide) to form chlorophyllide a (Chlide). This reaction is light-independent. The NB-protein (ChlN-ChlB) is the catalytic component of the complex. The polypeptide is Light-independent protochlorophyllide reductase subunit B (Chlamydomonas reinhardtii (Chlamydomonas smithii)).